A 271-amino-acid polypeptide reads, in one-letter code: Thiazole synthase (271 aa).

The Schiff-base intermediate with DXP role is filled by K104. 1-deoxy-D-xylulose 5-phosphate-binding positions include G165, 192-193 (AG), and 214-215 (NT).

Belongs to the ThiG family. In terms of assembly, homotetramer. Forms heterodimers with either ThiH or ThiS.

The protein localises to the cytoplasm. It catalyses the reaction [ThiS sulfur-carrier protein]-C-terminal-Gly-aminoethanethioate + 2-iminoacetate + 1-deoxy-D-xylulose 5-phosphate = [ThiS sulfur-carrier protein]-C-terminal Gly-Gly + 2-[(2R,5Z)-2-carboxy-4-methylthiazol-5(2H)-ylidene]ethyl phosphate + 2 H2O + H(+). It functions in the pathway cofactor biosynthesis; thiamine diphosphate biosynthesis. In terms of biological role, catalyzes the rearrangement of 1-deoxy-D-xylulose 5-phosphate (DXP) to produce the thiazole phosphate moiety of thiamine. Sulfur is provided by the thiocarboxylate moiety of the carrier protein ThiS. In vitro, sulfur can be provided by H(2)S. The protein is Thiazole synthase of Burkholderia thailandensis (strain ATCC 700388 / DSM 13276 / CCUG 48851 / CIP 106301 / E264).